The chain runs to 259 residues: 3-methyl-2-oxobutanoate hydroxymethyltransferase (259 aa).

Residues D44 and D83 each coordinate Mg(2+). 3-methyl-2-oxobutanoate contacts are provided by residues 44–45, D83, and K113; that span reads DS. E115 is a binding site for Mg(2+). The active-site Proton acceptor is E183.

The protein belongs to the PanB family. In terms of assembly, homodecamer; pentamer of dimers. Mg(2+) serves as cofactor.

The protein resides in the cytoplasm. It catalyses the reaction 3-methyl-2-oxobutanoate + (6R)-5,10-methylene-5,6,7,8-tetrahydrofolate + H2O = 2-dehydropantoate + (6S)-5,6,7,8-tetrahydrofolate. It participates in cofactor biosynthesis; (R)-pantothenate biosynthesis; (R)-pantoate from 3-methyl-2-oxobutanoate: step 1/2. Its function is as follows. Catalyzes the reversible reaction in which hydroxymethyl group from 5,10-methylenetetrahydrofolate is transferred onto alpha-ketoisovalerate to form ketopantoate. The protein is 3-methyl-2-oxobutanoate hydroxymethyltransferase of Acaryochloris marina (strain MBIC 11017).